Here is a 528-residue protein sequence, read N- to C-terminus: UDP-glucuronosyltransferase 2B19 (528 aa).

The signal sequence occupies residues 1–21 (MSMKWTSALLLIQLSCYLSFG). Position 135 is an N6-succinyllysine (Lys135). Asn315 carries N-linked (GlcNAc...) asparagine glycosylation. Residues 493–513 (VIGFLLACVATVIFIITKCLF) form a helical membrane-spanning segment.

It belongs to the UDP-glycosyltransferase family. As to expression, expressed in liver, ovary, prostate, colon, kidney, pancreas, brain, cerebellum, mammary gland and epididymis. Not expressed in small intestine, spleen, bladder, adrenal gland and testis.

The protein localises to the microsome membrane. It localises to the endoplasmic reticulum membrane. It carries out the reaction glucuronate acceptor + UDP-alpha-D-glucuronate = acceptor beta-D-glucuronoside + UDP + H(+). Its function is as follows. UDPGT is of major importance in the conjugation and subsequent elimination of potentially toxic xenobiotics and endogenous compounds. This isozyme displays activity toward several classes of xenobiotic substrates: eugenol, 4-methyllumbelliferone, p-nitrophenol, 1-naphthol, p,p'-biphenol, naringenin and o,o'-biphenol. Active also on 3a-hydroxy and 17b-hydroxy positions of steroids. In terms of biological role, contributes to the formation of androgen glucuronide in extrahepatic steroid target tissues such as the prostate. The chain is UDP-glucuronosyltransferase 2B19 (UGT2B19) from Macaca fascicularis (Crab-eating macaque).